The primary structure comprises 217 residues: Protein DJ-1alpha (217 aa).

The active-site Nucleophile is the Cys-133. Cys-133 is modified (cysteine sulfinic acid (-SO2H); alternate).

Expressed in testis (at protein level).

It is found in the cytoplasm. Its subcellular location is the nucleus. The protein resides in the mitochondrion. Functionally, plays an important role in cell protection against oxidative stress and cell death acting as oxidative stress sensor. Does not play a role in methylglyoxal detoxification. The chain is Protein DJ-1alpha from Drosophila melanogaster (Fruit fly).